Here is a 363-residue protein sequence, read N- to C-terminus: Phosphoserine aminotransferase (363 aa).

Arg-42 serves as a coordination point for L-glutamate. Residues Trp-105, Thr-155, Asp-175, and Gln-198 each contribute to the pyridoxal 5'-phosphate site. Lys-199 bears the N6-(pyridoxal phosphate)lysine mark. 240–241 provides a ligand contact to pyridoxal 5'-phosphate; the sequence is NT.

Belongs to the class-V pyridoxal-phosphate-dependent aminotransferase family. SerC subfamily. As to quaternary structure, homodimer. Pyridoxal 5'-phosphate is required as a cofactor.

The protein localises to the cytoplasm. The enzyme catalyses O-phospho-L-serine + 2-oxoglutarate = 3-phosphooxypyruvate + L-glutamate. It catalyses the reaction 4-(phosphooxy)-L-threonine + 2-oxoglutarate = (R)-3-hydroxy-2-oxo-4-phosphooxybutanoate + L-glutamate. Its pathway is amino-acid biosynthesis; L-serine biosynthesis; L-serine from 3-phospho-D-glycerate: step 2/3. It participates in cofactor biosynthesis; pyridoxine 5'-phosphate biosynthesis; pyridoxine 5'-phosphate from D-erythrose 4-phosphate: step 3/5. In terms of biological role, catalyzes the reversible conversion of 3-phosphohydroxypyruvate to phosphoserine and of 3-hydroxy-2-oxo-4-phosphonooxybutanoate to phosphohydroxythreonine. In Janthinobacterium sp. (strain Marseille) (Minibacterium massiliensis), this protein is Phosphoserine aminotransferase.